The following is a 202-amino-acid chain: Dephospho-CoA kinase (202 aa).

Residues 5-202 form the DPCK domain; that stretch reads IVGLTGGIAS…DADYRARSDR (198 aa). 13 to 18 provides a ligand contact to ATP; sequence ASGKSA.

It belongs to the CoaE family.

The protein localises to the cytoplasm. It catalyses the reaction 3'-dephospho-CoA + ATP = ADP + CoA + H(+). It functions in the pathway cofactor biosynthesis; coenzyme A biosynthesis; CoA from (R)-pantothenate: step 5/5. In terms of biological role, catalyzes the phosphorylation of the 3'-hydroxyl group of dephosphocoenzyme A to form coenzyme A. The protein is Dephospho-CoA kinase of Xanthomonas oryzae pv. oryzae (strain MAFF 311018).